Here is a 501-residue protein sequence, read N- to C-terminus: Glycerol kinase (501 aa).

Thr-16 serves as a coordination point for ADP. Thr-16, Thr-17, and Ser-18 together coordinate ATP. Thr-16 provides a ligand contact to sn-glycerol 3-phosphate. Residue Arg-20 coordinates ADP. Residues Arg-84, Glu-85, Tyr-135, and Asp-242 each contribute to the sn-glycerol 3-phosphate site. The glycerol site is built by Arg-84, Glu-85, Tyr-135, Asp-242, and Gln-243. The ADP site is built by Thr-264 and Gly-307. Residues Thr-264, Gly-307, Gln-311, and Gly-408 each coordinate ATP. Residue Gly-408 participates in ADP binding.

It belongs to the FGGY kinase family.

The enzyme catalyses glycerol + ATP = sn-glycerol 3-phosphate + ADP + H(+). Its pathway is polyol metabolism; glycerol degradation via glycerol kinase pathway; sn-glycerol 3-phosphate from glycerol: step 1/1. Functionally, key enzyme in the regulation of glycerol uptake and metabolism. Catalyzes the phosphorylation of glycerol to yield sn-glycerol 3-phosphate. This is Glycerol kinase from Saccharolobus islandicus (strain M.14.25 / Kamchatka #1) (Sulfolobus islandicus).